The chain runs to 343 residues: Twinfilin (343 aa).

2 ADF-H domains span residues 4–139 (QTGI…KHKI) and 177–312 (GINC…EELH). The tract at residues 317–343 (NLRPQFSKPKGPPSRGAKRLTKPQAVE) is disordered.

This sequence belongs to the actin-binding proteins ADF family. Twinfilin subfamily. As to quaternary structure, interacts with G-actin; ADP-actin form.

The protein localises to the cytoplasm. It is found in the cytoskeleton. The protein resides in the cell cortex. Functionally, actin-binding protein involved in motile and morphological processes. Inhibits actin polymerization, likely by sequestering G-actin. This is Twinfilin (twf) from Aedes aegypti (Yellowfever mosquito).